We begin with the raw amino-acid sequence, 564 residues long: NAD-dependent malic enzyme (564 aa).

The Proton donor role is filled by Y104. Position 157 (R157) interacts with NAD(+). The active-site Proton acceptor is K175. A divalent metal cation contacts are provided by E246, D247, and D270. NAD(+) is bound by residues D270 and N417.

It belongs to the malic enzymes family. In terms of assembly, homotetramer. Mg(2+) serves as cofactor. The cofactor is Mn(2+).

The enzyme catalyses (S)-malate + NAD(+) = pyruvate + CO2 + NADH. It carries out the reaction oxaloacetate + H(+) = pyruvate + CO2. This Aeromonas salmonicida (strain A449) protein is NAD-dependent malic enzyme.